Consider the following 1082-residue polypeptide: Neisserial autotransporter lipoprotein NalP (1082 aa).

A signal peptide spans 1 to 27 (MRTTPTFPTKTFKPTAMALAVATTLSA). Cysteine 28 carries the N-palmitoyl cysteine lipid modification. Residue cysteine 28 is the site of S-diacylglycerol cysteine attachment. A Peptidase S8 domain is found at 110–482 (NDAYKNLINL…WGLLDAGKAM (373 aa)). Residues aspartate 138, histidine 210, and serine 426 each act as charge relay system in the active site. The Autotransporter domain occupies 808-1082 (DGLDHNGTGL…SGRVGVGYRF (275 aa)).

This sequence belongs to the peptidase S8 family. In terms of processing, probably auto-processes to yield a 68-70 kDa form and a C-terminal 30 kDa translocator domain; upon overexpression in situ and in E.coli full-length protein is seen as well as (probably) auto-processed forms of 68-70 kDa and 30 kDa in size, suggesting this may have protease activity.

The protein localises to the cell outer membrane. The protein resides in the cell surface. It localises to the secreted. Its subcellular location is the host cytoplasm. It is found in the host perinuclear region. Cleavage of host complement factor C3 is inhibited by PMSF. In terms of biological role, major human immunogenic protein, detected in patients recovering from meningitidis. Autotransporter with a secreted protease domain involved in processing other autotransporter proteins including App, IgA, LbpB and NHBA. Probably autoprocesses to release the about 70 kDa passenger domain. Both cell surface protein (Neisserial autotransporter lipoprotein NalP) and the passenger domain cleave human (host) complement factor C3, generating a shorter alpha chain and a longer beta chain than normal. Uptake of a passenger domain fragment (residues 101-784) by human cells increases cell metabolic activity; the serine protease activity is required for this increase. Cleaves human (host) complement factor C3, generating a shorter alpha chain and a longer beta chain than normal. Does not act on mouse or rabbit C3. Cleavage causes C3b degradation by human CFI and CFH, and thus decreases deposition of C3b on the bacteria surface and probably facilitates complement escape. Functionally, plays a role in extracellular-DNA (eDNA) mediated biofilm formation. In some strains (including cc32 strain MC58) eDNA stimulates biofilm formation. When NalP is not expressed (and no longer processes NHBA or IgA) biofilm formation increases. The polypeptide is Neisserial autotransporter lipoprotein NalP (Neisseria meningitidis serogroup B (strain ATCC BAA-335 / MC58)).